Reading from the N-terminus, the 418-residue chain is Tyrosine--tRNA ligase 1 (418 aa).

L-tyrosine is bound at residue tyrosine 34. Positions 39–48 (PTADSLHLGH) match the 'HIGH' region motif. L-tyrosine contacts are provided by tyrosine 169 and glutamine 173. The short motif at 229–233 (KFGKS) is the 'KMSKS' region element. ATP is bound at residue lysine 232. Positions 352–418 (LNIVELLVNA…GKKKNFVLTY (67 aa)) constitute an S4 RNA-binding domain.

This sequence belongs to the class-I aminoacyl-tRNA synthetase family. TyrS type 1 subfamily. In terms of assembly, homodimer.

Its subcellular location is the cytoplasm. It carries out the reaction tRNA(Tyr) + L-tyrosine + ATP = L-tyrosyl-tRNA(Tyr) + AMP + diphosphate + H(+). In terms of biological role, catalyzes the attachment of tyrosine to tRNA(Tyr) in a two-step reaction: tyrosine is first activated by ATP to form Tyr-AMP and then transferred to the acceptor end of tRNA(Tyr). The protein is Tyrosine--tRNA ligase 1 of Streptococcus thermophilus (strain CNRZ 1066).